The sequence spans 160 residues: MAIQPLRLDPITVLGKQLVIELFDCVDTRFDDIQWIEESMLEAARQANATIITSAFHKFSPIGISGVVVIAESHLAIHTWPEYGYAAVDVFTCGDVLDGAQAVRVLSERLGSQRHLISSMDRGLGGHRLGLLSRSLAGNAPVDGDSPTLRWALGQGTGVA.

Ser-73 acts as the Schiff-base intermediate with substrate; via pyruvic acid in catalysis. Ser-73 is modified (pyruvic acid (Ser); by autocatalysis). Residue His-78 is the Proton acceptor; for processing activity of the active site. Cys-93 serves as the catalytic Proton donor; for catalytic activity.

Belongs to the prokaryotic AdoMetDC family. Type 1 subfamily. Heterotetramer of two alpha and two beta chains arranged as a dimer of alpha/beta heterodimers. It depends on pyruvate as a cofactor. Is synthesized initially as an inactive proenzyme. Formation of the active enzyme involves a self-maturation process in which the active site pyruvoyl group is generated from an internal serine residue via an autocatalytic post-translational modification. Two non-identical subunits are generated from the proenzyme in this reaction, and the pyruvate is formed at the N-terminus of the alpha chain, which is derived from the carboxyl end of the proenzyme. The post-translation cleavage follows an unusual pathway, termed non-hydrolytic serinolysis, in which the side chain hydroxyl group of the serine supplies its oxygen atom to form the C-terminus of the beta chain, while the remainder of the serine residue undergoes an oxidative deamination to produce ammonia and the pyruvoyl group blocking the N-terminus of the alpha chain.

The enzyme catalyses S-adenosyl-L-methionine + H(+) = S-adenosyl 3-(methylsulfanyl)propylamine + CO2. It functions in the pathway amine and polyamine biosynthesis; S-adenosylmethioninamine biosynthesis; S-adenosylmethioninamine from S-adenosyl-L-methionine: step 1/1. Functionally, catalyzes the decarboxylation of S-adenosylmethionine to S-adenosylmethioninamine (dcAdoMet), the propylamine donor required for the synthesis of the polyamines spermine and spermidine from the diamine putrescine. This is S-adenosylmethionine decarboxylase proenzyme from Pseudomonas paraeruginosa (strain DSM 24068 / PA7) (Pseudomonas aeruginosa (strain PA7)).